Here is a 990-residue protein sequence, read N- to C-terminus: Translation initiation factor IF-2 (990 aa).

Residues 92–402 (KKRTFVKRDD…QRDEHLQAAP (311 aa)) form a disordered region. 2 stretches are compositionally biased toward low complexity: residues 104–116 (EGAADGAGSAAFA) and 131–151 (EAPAEQAQADAAPAADGAAPA). Basic and acidic residues predominate over residues 158-201 (ELARREEQARHQAELIRRQEAELAAKRAAREAREKREREAEERA). Positions 223-243 (TREQAAEATARNAAQLQARAK) are enriched in low complexity. Basic and acidic residues predominate over residues 244 to 264 (AAAESKARSDEEAARAADLDA). Low complexity-rich tracts occupy residues 281–290 (ATPKKAVMVA) and 318–342 (PAVGATRTAAGAARAGAAAGAPGAG). Composition is skewed to basic and acidic residues over residues 358-368 (PAKKKEIKTRG) and 386-398 (RRGDSRDQRDEHL). Residues 490–659 (PRAPVVTVMG…LLQADVMELK (170 aa)) form the tr-type G domain. A G1 region spans residues 499-506 (GHVDHGKT). 499–506 (GHVDHGKT) contributes to the GTP binding site. Residues 524-528 (GITQH) form a G2 region. Positions 545-548 (DTPG) are G3. Residues 545-549 (DTPGH) and 599-602 (TKAD) each bind GTP. The tract at residues 599–602 (TKAD) is G4. The interval 635-637 (SSK) is G5.

The protein belongs to the TRAFAC class translation factor GTPase superfamily. Classic translation factor GTPase family. IF-2 subfamily.

It is found in the cytoplasm. Functionally, one of the essential components for the initiation of protein synthesis. Protects formylmethionyl-tRNA from spontaneous hydrolysis and promotes its binding to the 30S ribosomal subunits. Also involved in the hydrolysis of GTP during the formation of the 70S ribosomal complex. The chain is Translation initiation factor IF-2 from Verminephrobacter eiseniae (strain EF01-2).